Consider the following 207-residue polypeptide: uncharacterized protein (207 aa).

Its subcellular location is the mitochondrion. This is an uncharacterized protein from Marchantia polymorpha (Common liverwort).